A 967-amino-acid chain; its full sequence is Leucine-rich repeat-containing G-protein coupled receptor 6 (967 aa).

The first 24 residues, 1–24 (MPSPPGLRALWLCAALCASRRAGG), serve as a signal peptide directing secretion. Topologically, residues 25–567 (APQPGPGPTA…LFESWGIRLA (543 aa)) are extracellular. One can recognise an LRRNT domain in the interval 26-66 (PQPGPGPTACPAPCHCQEDGIMLSADCSELGLSAVPGDLDP). N-linked (GlcNAc...) asparagine glycosylation is present at N77. 15 LRR repeats span residues 91–112 (FLEE…AFSG), 115–136 (SLKI…ALWE), 139–160 (SLQS…SFEG), 163–186 (SLRH…NNLP), 187–208 (ALQA…AFQN), 211–232 (SLVV…SFEG), 235–256 (NLET…IRTL), 258–279 (RLQE…AFMG), 282–303 (LLQT…AFQY), 306–328 (KLHT…KGTT), 329–350 (SLEI…MCQQ), 353–374 (RLRV…HRCQ), 375–396 (KLEE…TFSQ), 399–420 (SLQA…AFST), and 423–443 (SLVK…AGLG). A glycan (N-linked (GlcNAc...) asparagine) is linked at N208. The helical transmembrane segment at 568–588 (VWAIVLLSVLCNGLVLLTVFA) threads the bilayer. At 589–598 (GGPVPLPPVK) the chain is on the cytoplasmic side. A helical membrane pass occupies residues 599 to 619 (FVVGAIAGANTLTGISCGLLA). Topologically, residues 620 to 644 (SVDALTFGQFSEYGARWETGLGCRA) are extracellular. A disulfide bridge links C642 with C717. A helical transmembrane segment spans residues 645–665 (TGFLAVLGSEASVLLLTLAAV). Over 666–687 (QCSVSVSCVRAYGKSPSLGSVR) the chain is Cytoplasmic. Residues 688–708 (AGVLGCLALAGLAAALPLASV) form a helical membrane-spanning segment. Topologically, residues 709–727 (GEYGASPLCLPYAPPEGQP) are extracellular. A helical membrane pass occupies residues 728–748 (AALGFTVALVMMNSFCFLVVA). Residues 749 to 774 (GAYIKLYCDLPRGDFEAVWDCAMVRH) lie on the Cytoplasmic side of the membrane. A helical transmembrane segment spans residues 775 to 795 (VAWLIFADGLLYCPVAFLSFA). Residues 796 to 809 (SMLGLFPVTPEAVK) lie on the Extracellular side of the membrane. A helical membrane pass occupies residues 810–830 (SVLLVVLPLPACLNPLLYLLF). Topologically, residues 831–967 (NPHFRDDLRR…PSGLAFASHV (137 aa)) are cytoplasmic.

This sequence belongs to the G-protein coupled receptor 1 family.

Its subcellular location is the cell membrane. Its function is as follows. Receptor for R-spondins that potentiates the canonical Wnt signaling pathway and acts as a marker of multipotent stem cells in the epidermis. Upon binding to R-spondins (RSPO1, RSPO2, RSPO3 or RSPO4), associates with phosphorylated LRP6 and frizzled receptors that are activated by extracellular Wnt receptors, triggering the canonical Wnt signaling pathway to increase expression of target genes. In contrast to classical G-protein coupled receptors, does not activate heterotrimeric G-proteins to transduce the signal. May act as a tumor suppressor. This chain is Leucine-rich repeat-containing G-protein coupled receptor 6 (LGR6), found in Homo sapiens (Human).